We begin with the raw amino-acid sequence, 874 residues long: Alanine--tRNA ligase (874 aa).

4 residues coordinate Zn(2+): histidine 564, histidine 568, cysteine 666, and histidine 670.

Belongs to the class-II aminoacyl-tRNA synthetase family. It depends on Zn(2+) as a cofactor.

It localises to the cytoplasm. The enzyme catalyses tRNA(Ala) + L-alanine + ATP = L-alanyl-tRNA(Ala) + AMP + diphosphate. Its function is as follows. Catalyzes the attachment of alanine to tRNA(Ala) in a two-step reaction: alanine is first activated by ATP to form Ala-AMP and then transferred to the acceptor end of tRNA(Ala). Also edits incorrectly charged Ser-tRNA(Ala) and Gly-tRNA(Ala) via its editing domain. This is Alanine--tRNA ligase from Carboxydothermus hydrogenoformans (strain ATCC BAA-161 / DSM 6008 / Z-2901).